The chain runs to 62 residues: Cytochrome b-c1 complex subunit 6-2, mitochondrial (62 aa).

Cystine bridges form between Cys17-Cys59 and Cys31-Cys45.

It belongs to the UQCRH/QCR6 family. In terms of assembly, component of the ubiquinol-cytochrome c oxidoreductase (cytochrome b-c1 complex, complex III, CIII), a multisubunit enzyme composed of 10 subunits. The complex is composed of 3 respiratory subunits cytochrome b (MT-CYB), cytochrome c1 (CYC1-1 or CYC1-2) and Rieske protein (UCR1-1 or UCR1-2), 2 core protein subunits MPPalpha1 (or MPPalpha2) and MPPB, and 5 low-molecular weight protein subunits QCR7-1 (or QCR7-2), UCRQ-1 (or UCRQ-2), QCR9, UCRY and probably QCR6-1 (or QCR6-2). The complex exists as an obligatory dimer and forms supercomplexes (SCs) in the inner mitochondrial membrane with NADH-ubiquinone oxidoreductase (complex I, CI), resulting in different assemblies (supercomplexes SCI(1)III(2) and SCI(2)III(4)).

It is found in the mitochondrion inner membrane. Functionally, component of the ubiquinol-cytochrome c oxidoreductase, a multisubunit transmembrane complex that is part of the mitochondrial electron transport chain which drives oxidative phosphorylation. The respiratory chain contains 3 multisubunit complexes succinate dehydrogenase (complex II, CII), ubiquinol-cytochrome c oxidoreductase (cytochrome b-c1 complex, complex III, CIII) and cytochrome c oxidase (complex IV, CIV), that cooperate to transfer electrons derived from NADH and succinate to molecular oxygen, creating an electrochemical gradient over the inner membrane that drives transmembrane transport and the ATP synthase. The cytochrome b-c1 complex catalyzes electron transfer from ubiquinol to cytochrome c, linking this redox reaction to translocation of protons across the mitochondrial inner membrane, with protons being carried across the membrane as hydrogens on the quinol. In the process called Q cycle, 2 protons are consumed from the matrix, 4 protons are released into the intermembrane space and 2 electrons are passed to cytochrome c. The protein is Cytochrome b-c1 complex subunit 6-2, mitochondrial (QCR6-2) of Arabidopsis thaliana (Mouse-ear cress).